We begin with the raw amino-acid sequence, 52 residues long: Large ribosomal subunit protein eL40 (52 aa).

Positions 20, 23, 34, and 39 each coordinate Zn(2+).

This sequence belongs to the eukaryotic ribosomal protein eL40 family. Component of the large ribosomal subunit. Mature ribosomes consist of a small (40S) and a large (60S) subunit. The 40S subunit contains about 32 different proteins and 1 molecule of RNA (18S). The 60S subunit contains 45 different proteins and 3 molecules of RNA (25S, 5.8S and 5S). It depends on Zn(2+) as a cofactor.

It is found in the cytoplasm. Functionally, component of the ribosome, a large ribonucleoprotein complex responsible for the synthesis of proteins in the cell. The small ribosomal subunit (SSU) binds messenger RNAs (mRNAs) and translates the encoded message by selecting cognate aminoacyl-transfer RNA (tRNA) molecules. The large subunit (LSU) contains the ribosomal catalytic site termed the peptidyl transferase center (PTC), which catalyzes the formation of peptide bonds, thereby polymerizing the amino acids delivered by tRNAs into a polypeptide chain. The nascent polypeptides leave the ribosome through a tunnel in the LSU and interact with protein factors that function in enzymatic processing, targeting, and the membrane insertion of nascent chains at the exit of the ribosomal tunnel. The sequence is that of Large ribosomal subunit protein eL40 from Candida albicans (strain SC5314 / ATCC MYA-2876) (Yeast).